The sequence spans 1022 residues: Collagen alpha-1(I) chain (1022 aa).

A disordered region spans residues 1–1022; the sequence is SAGGISVPGP…PGPPGPPGPP (1022 aa). 11 positions are modified to 4-hydroxyproline: proline 20, proline 23, proline 26, proline 35, proline 38, proline 41, proline 56, proline 71, proline 77, proline 86, and proline 92. Positions 28-47 are enriched in low complexity; it reads PQGFQGPPGEPGEPGASGPM. A compositionally biased stretch (basic and acidic residues) spans 59–73; the sequence is NGDDGEAGKPGRPGE. Residue lysine 95 is modified to 5-hydroxylysine; alternate. An O-linked (Gal...) hydroxylysine; alternate glycan is attached at lysine 95. Serine 101 carries the phosphoserine modification. A compositionally biased stretch (low complexity) spans 109 to 125; that stretch reads DAGPAGPKGEPGSPGEN. 16 positions are modified to 4-hydroxyproline: proline 119, proline 122, proline 128, proline 137, proline 143, proline 164, proline 173, proline 176, proline 203, proline 206, proline 218, proline 224, proline 233, proline 239, proline 242, and proline 257. Low complexity predominate over residues 143-161; the sequence is PGASGPAGARGNDGAAGAA. A compositionally biased stretch (pro residues) spans 163 to 175; the sequence is PPGPTGPAGPPGF. The segment covering 209–259 has biased composition (low complexity); the sequence is AGAAGPAGNPGADGQPGAKGANGAPGIAGAPGFPGARGPSGPQGPSGAPGP. 5-hydroxylysine is present on lysine 260. A 4-hydroxyproline mark is found at proline 266, proline 269, proline 281, proline 290, proline 305, proline 311, proline 320, and proline 326. A compositionally biased stretch (gly residues) spans 315–324; it reads GERGGPGSRG. Lysine 335 is subject to 5-hydroxylysine. Proline 344, proline 353, proline 359, proline 365, proline 374, proline 377, proline 386, proline 395, proline 401, proline 413, proline 422, proline 431, proline 434, proline 452, proline 470, proline 476, proline 482, proline 488, proline 494, proline 500, proline 512, proline 521, proline 533, proline 545, proline 548, proline 554, proline 560, and proline 569 each carry 4-hydroxyproline. Over residues 368-394 the composition is skewed to low complexity; it reads KGLTGSPGSPGPDGKTGPPGPAGQDGR. The span at 403-422 shows a compositional bias: low complexity; it reads ARGQAGVMGFPGPKGAAGEP. The segment covering 464-491 has biased composition (low complexity); the sequence is QGPAGSPGFQGLPGPAGPPGEAGKPGEQ. Residues 530 to 557 are compositionally biased toward low complexity; it reads NGAPGNDGAKGDAGAPGAPGSQGAPGLQ. At lysine 581 the chain carries 5-hydroxylysine. 3 positions are modified to 4-hydroxyproline: proline 587, proline 602, and proline 608. Residues 614-628 show a composition bias toward low complexity; the sequence is SGPSGPAGPTGARGA. A Phosphoserine modification is found at serine 617. 4-hydroxyproline is present on residues proline 629, proline 635, proline 638, proline 647, proline 653, proline 671, proline 680, and proline 689. Positions 641-668 are enriched in low complexity; that stretch reads AGFAGPPGADGQPGAKGEPGDAGAKGDA. Positions 670–682 are enriched in pro residues; it reads PPGPAGPTGPPGP. Lysine 692 is subject to 5-hydroxylysine. The span at 697 to 713 shows a compositional bias: low complexity; sequence SAGPPGATGFPGAAGRV. Proline 701 and proline 707 each carry 4-hydroxyproline. 3-hydroxyproline is present on proline 715. A 4-hydroxyproline mark is found at proline 716, proline 725, proline 728, proline 749, proline 758, proline 767, proline 776, proline 794, proline 803, proline 806, proline 812, proline 827, proline 833, proline 839, proline 848, and proline 854. Residues 742–751 are compositionally biased toward low complexity; sequence ETGPAGRPGE. The segment covering 761–776 has biased composition (low complexity); that stretch reads TGEKGSPGADGPAGAP. Over residues 826–836 the composition is skewed to pro residues; the sequence is PPGPVGPPGLA. The segment covering 838-853 has biased composition (low complexity); it reads PPGESGREGSPGAEGS. Lysine 863 carries the 5-hydroxylysine modification. Positions 872–887 are enriched in pro residues; the sequence is AGPPGAPGAPGAPGPV. 3 positions are modified to 4-hydroxyproline: proline 875, proline 878, and proline 881. A compositionally biased stretch (low complexity) spans 908–922; the sequence is AGPAGARGPAGPQGP. A compositionally biased stretch (basic and acidic residues) spans 923–937; the sequence is RGDKGETGEQGDRGI. Lysine 926 is subject to 5-hydroxylysine. Position 938 is a 5-hydroxylysine; alternate (lysine 938). O-linked (Gal...) hydroxylysine; alternate glycosylation is present at lysine 938. A 4-hydroxyproline mark is found at proline 953, proline 956, proline 974, and proline 989. A compositionally biased stretch (low complexity) spans 956–989; the sequence is PGEQGPSGASGPAGPRGPPGSAGSPGKDGLNGLP. A 3-hydroxyproline modification is found at proline 994. Proline 995 bears the 4-hydroxyproline mark. The segment covering 1007 to 1022 has biased composition (pro residues); it reads VGPPGPPGPPGPPGPP. The residue at position 1009 (proline 1009) is a 3-hydroxyproline. Position 1010 is a 4-hydroxyproline (proline 1010). Proline 1012 carries the 3-hydroxyproline modification. Proline 1013 bears the 4-hydroxyproline mark. At proline 1015 the chain carries 3-hydroxyproline. 4-hydroxyproline is present on residues proline 1016, proline 1019, and proline 1022.

Belongs to the fibrillar collagen family. In terms of assembly, trimers of one alpha 2(I) and two alpha 1(I) chains. In terms of processing, prolines at the third position of the tripeptide repeating unit (G-X-Y) are hydroxylated in some or all of the chains. In terms of tissue distribution, expressed in bone.

The protein resides in the secreted. The protein localises to the extracellular space. Its subcellular location is the extracellular matrix. In terms of biological role, type I collagen is a member of group I collagen (fibrillar forming collagen). The chain is Collagen alpha-1(I) chain from Mylodon darwinii (Giant ground sloth).